We begin with the raw amino-acid sequence, 705 residues long: Polyribonucleotide nucleotidyltransferase (705 aa).

The Mg(2+) site is built by Asp-486 and Asp-492. A KH domain is found at 553–612 (PRIHTIRINPDKIKDVIGKGGSVIRALTEETGTTIEIEDDGTVKIAATDGEKAKFAIRRI). The region spanning 622–690 (GRIYQGKVTR…RQGRVRLSIK (69 aa)) is the S1 motif domain.

Belongs to the polyribonucleotide nucleotidyltransferase family. In terms of assembly, component of the RNA degradosome, which is a multiprotein complex involved in RNA processing and mRNA degradation. Mg(2+) serves as cofactor.

Its subcellular location is the cytoplasm. The catalysed reaction is RNA(n+1) + phosphate = RNA(n) + a ribonucleoside 5'-diphosphate. In terms of biological role, involved in mRNA degradation. Catalyzes the phosphorolysis of single-stranded polyribonucleotides processively in the 3'- to 5'-direction. This Serratia proteamaculans (strain 568) protein is Polyribonucleotide nucleotidyltransferase.